The chain runs to 351 residues: Large ribosomal subunit protein uL3 (351 aa).

Disordered stretches follow at residues 1–31 (MGHR…TPRT) and 246–271 (KGSR…GQLG).

It belongs to the universal ribosomal protein uL3 family. Part of the 50S ribosomal subunit. Forms a cluster with proteins L14 and L24e.

In terms of biological role, one of the primary rRNA binding proteins, it binds directly near the 3'-end of the 23S rRNA, where it nucleates assembly of the 50S subunit. This is Large ribosomal subunit protein uL3 from Saccharolobus solfataricus (strain ATCC 35092 / DSM 1617 / JCM 11322 / P2) (Sulfolobus solfataricus).